We begin with the raw amino-acid sequence, 230 residues long: 5'-methylthioadenosine/S-adenosylhomocysteine nucleosidase (230 aa).

Catalysis depends on Glu12, which acts as the Proton acceptor. Substrate is bound by residues Gly78, Ile153, and 174-175 (ME). Asp198 (proton donor) is an active-site residue.

This sequence belongs to the PNP/UDP phosphorylase family. MtnN subfamily.

It catalyses the reaction S-adenosyl-L-homocysteine + H2O = S-(5-deoxy-D-ribos-5-yl)-L-homocysteine + adenine. The enzyme catalyses S-methyl-5'-thioadenosine + H2O = 5-(methylsulfanyl)-D-ribose + adenine. The catalysed reaction is 5'-deoxyadenosine + H2O = 5-deoxy-D-ribose + adenine. Its pathway is amino-acid biosynthesis; L-methionine biosynthesis via salvage pathway; S-methyl-5-thio-alpha-D-ribose 1-phosphate from S-methyl-5'-thioadenosine (hydrolase route): step 1/2. Its function is as follows. Catalyzes the irreversible cleavage of the glycosidic bond in both 5'-methylthioadenosine (MTA) and S-adenosylhomocysteine (SAH/AdoHcy) to adenine and the corresponding thioribose, 5'-methylthioribose and S-ribosylhomocysteine, respectively. Also cleaves 5'-deoxyadenosine, a toxic by-product of radical S-adenosylmethionine (SAM) enzymes, into 5-deoxyribose and adenine. The chain is 5'-methylthioadenosine/S-adenosylhomocysteine nucleosidase from Shewanella pealeana (strain ATCC 700345 / ANG-SQ1).